The following is a 204-amino-acid chain: MTLGIDEAGRGCLAGSLFVAGVACSEKTALEFLKMGLKDSKKLSQKKRFFLEDKIKTHGEVGFFVVKKSAEAIDSLGLGACLKLAIEEILENGCSLANEIKIDGNTAFGLNKRYPNIQTIIKGDETIAQIAMASVLAKAAKDREMLELHALFKEYGWDKNCGYGTKQHIEAIIKLGATPFHRHSFTLKNRILNPKLLEVEQRLV.

Residues 1–197 enclose the RNase H type-2 domain; it reads MTLGIDEAGR…KNRILNPKLL (197 aa). The a divalent metal cation site is built by aspartate 6, glutamate 7, and aspartate 103.

The protein belongs to the RNase HII family. The cofactor is Mn(2+). Mg(2+) is required as a cofactor.

Its subcellular location is the cytoplasm. The catalysed reaction is Endonucleolytic cleavage to 5'-phosphomonoester.. Endonuclease that specifically degrades the RNA of RNA-DNA hybrids. This chain is Ribonuclease HII, found in Helicobacter pylori (strain HPAG1).